Reading from the N-terminus, the 511-residue chain is Activin receptor type-2B (511 aa).

The first 20 residues, 1–20 (MGASVALTFLLLLATFRAGS), serve as a signal peptide directing secretion. Residues 21 to 136 (GHDEVETREC…KPQPSASVLN (116 aa)) lie on the Extracellular side of the membrane. Residues cysteine 30 and cysteine 61 are joined by a disulfide bond. Asparagine 43 and asparagine 67 each carry an N-linked (GlcNAc...) asparagine glycan. Intrachain disulfides connect cysteine 86–cysteine 105, cysteine 92–cysteine 104, and cysteine 106–cysteine 111. A helical transmembrane segment spans residues 137-157 (ILIYSLLPIVGLSMAILLAFW). At 158-511 (MYRHRKPSYG…VDLPPKESSI (354 aa)) the chain is on the cytoplasmic side. The Protein kinase domain occupies 189–477 (LQLLDIKARG…LSAGCVEERI (289 aa)). Residues 195 to 203 (KARGRFGCV) and lysine 216 each bind ATP. The active-site Proton acceptor is aspartate 320.

Belongs to the protein kinase superfamily. TKL Ser/Thr protein kinase family. TGFB receptor subfamily.

It localises to the membrane. It carries out the reaction L-threonyl-[receptor-protein] + ATP = O-phospho-L-threonyl-[receptor-protein] + ADP + H(+). It catalyses the reaction L-seryl-[receptor-protein] + ATP = O-phospho-L-seryl-[receptor-protein] + ADP + H(+). Receptor for activin A, activin B and inhibin A. Involved in transmembrane signaling. This Xenopus laevis (African clawed frog) protein is Activin receptor type-2B (acvr2b).